We begin with the raw amino-acid sequence, 277 residues long: Tryptophan synthase alpha chain (277 aa).

Active-site proton acceptor residues include Glu51 and Glu62.

The protein belongs to the TrpA family. Tetramer of two alpha and two beta chains.

It carries out the reaction (1S,2R)-1-C-(indol-3-yl)glycerol 3-phosphate + L-serine = D-glyceraldehyde 3-phosphate + L-tryptophan + H2O. Its pathway is amino-acid biosynthesis; L-tryptophan biosynthesis; L-tryptophan from chorismate: step 5/5. In terms of biological role, the alpha subunit is responsible for the aldol cleavage of indoleglycerol phosphate to indole and glyceraldehyde 3-phosphate. This chain is Tryptophan synthase alpha chain, found in Phenylobacterium zucineum (strain HLK1).